The following is a 325-amino-acid chain: NADH-quinone oxidoreductase subunit H (325 aa).

9 helical membrane passes run 11–31, 50–69, 81–101, 114–134, 154–174, 186–206, 237–257, 265–285, and 304–324; these read ILLS…CGAF, NRVG…KMFF, VIFT…FAIV, IGIL…LFAG, VSYE…AGSF, LWNV…GVAV, FFVG…TLFF, LPPF…FILI, and VCLP…LWQA.

The protein belongs to the complex I subunit 1 family. NDH-1 is composed of 13 different subunits. Subunits NuoA, H, J, K, L, M, N constitute the membrane sector of the complex.

It is found in the cell inner membrane. The enzyme catalyses a quinone + NADH + 5 H(+)(in) = a quinol + NAD(+) + 4 H(+)(out). In terms of biological role, NDH-1 shuttles electrons from NADH, via FMN and iron-sulfur (Fe-S) centers, to quinones in the respiratory chain. The immediate electron acceptor for the enzyme in this species is believed to be ubiquinone. Couples the redox reaction to proton translocation (for every two electrons transferred, four hydrogen ions are translocated across the cytoplasmic membrane), and thus conserves the redox energy in a proton gradient. This subunit may bind ubiquinone. In Salmonella agona (strain SL483), this protein is NADH-quinone oxidoreductase subunit H.